The following is a 238-amino-acid chain: MIYKSIAERLRIRLNSADFTLNSLLPGEKKLAEEFAVSRMTIRKAIDLLVAWGLVVRRHGSGTYLVRKDVLHQTASLTGLVEVLKRQGKTVTSQVLIFEIMPAPPAIASQLRIQINEQIYFSRRVRFVEGKPLMLEDSYMPVKLFRNLSLQHLEGSKFEYIEQECGILIGGNYESLTPVLADRLLARQMKVAEHTPLLRITSLSYSESGEFLNYSVMFRNASEYQVEYHLRRLHPEKS.

Residues 1–68 enclose the HTH gntR-type domain; sequence MIYKSIAERL…HGSGTYLVRK (68 aa). Residues 28 to 47 constitute a DNA-binding region (H-T-H motif); that stretch reads EKKLAEEFAVSRMTIRKAID.

This is an uncharacterized protein from Escherichia coli (strain K12).